The sequence spans 267 residues: Sepiapterin reductase (267 aa).

An N-acetylmethionine modification is found at Met1. 20-26 (GASRGFG) is a binding site for NADP(+). Ser38 is modified (phosphoserine). NADP(+) is bound by residues 48 to 49 (RN) and 75 to 76 (DL). Substrate contacts are provided by residues 163 to 164 (SI) and Tyr176. Lys180 contributes to the NADP(+) binding site. Ser201 carries the phosphoserine modification. Gly205 contacts substrate. 207–212 (LDTDMQ) lines the NADP(+) pocket. Ser219 carries the phosphoserine modification. Asp263 contacts substrate.

This sequence belongs to the sepiapterin reductase family. In terms of assembly, homodimer.

It localises to the cytoplasm. It carries out the reaction L-erythro-7,8-dihydrobiopterin + NADP(+) = L-sepiapterin + NADPH + H(+). The catalysed reaction is (6R)-L-erythro-5,6,7,8-tetrahydrobiopterin + 2 NADP(+) = 6-pyruvoyl-5,6,7,8-tetrahydropterin + 2 NADPH + 2 H(+). Its function is as follows. Catalyzes the final one or two reductions in tetra-hydrobiopterin biosynthesis to form 5,6,7,8-tetrahydrobiopterin. The sequence is that of Sepiapterin reductase (SPR) from Bos taurus (Bovine).